Reading from the N-terminus, the 1251-residue chain is MSERTKWTDEQWEAITGNEKSLLVSAAAGAGKTAVLVERIIRKITDEENPVDIDRLLVVTFTNAAATEMRERIAQAISEKLEENPGSANIQRQLTLLGKACITTIHSFCLEVIRSNFQQINIDPGFRIADETESRLMKLEALDEVFEEQYENENEDFFELLECYGGNRDDRALQDMVLNLYDFIQSSPWPEEWLEKMTESMNIPDGTDFGKTLWGSVLLSSVKIELEGLKEMISRALEILKDASGLEKYRAVYMEDLANVDALLKLLNEESEMQWDRIFNALQGFEFATLPRCGREVDKDKQEIVKKIRDDVKQRIRKFREKVITSVSNEIISDLKALYPKMKCLANLVKQLAEKYAEKKNRKSVVDFNDLEHFCLEILTERKEDGSIIPSRTAISYRERFAEILVDEYQDSNLVQETIINMISKGDDASPGVFMVGDVKQSIYRFRQARPELFLEKYNTYLPDKGSPCRKIILSRNFRSRREVIDAVNFLFKQIMSTGAGELDYTDAEALNFGAVFDENAKEDITVGGEVEFHLIQTEDEDKNFTFENEGEEGRQADEGEEDEEMLDSIQCEARLVGRRILELMKPDENGRYFSVFDKAKNEYRRVEYRDVVILLRTTRNWAEVFVDELSVMGIPVFADTGTGFFKTVEVQVMLSLLQIIDNPLQDIPLLSVLRSPIVGFTTDELAELRLVDKKALLFDALKKLAESGQGEAAGKASAFLENLQKWREMSLYMSTDRLLWQLYNDTGYYSIVGAMPAGEQRQANLRILYERARQFEETSYKGLFNFINFIDKLKSSRGDMGSAKILSENDNVVRIMSIHKSKGLEFPVVIVAGCGKKFNLQDMNKSILLHHELGFGPDVVDHKLRLSWPSVAKQAIREKIKAETLSEEMRILYVALTRAREKLVITGAVKNVRKAVEKWLDSASVQKSRLSAYDMLSGANYLDWIGPALLRHKNCGGLRDCVGSAGFRGLLIDDPSVWSVKIWNKTDVQSSGVSEEQGESEFIKWLDSLEKEEPSEYAEETARRLSWSYPYVKASKVPAKVSVTELKRRYNEVVSEDVMQFPDYMPVLVKKPMFLEEKKGLTYAEKGTILHFVMQHLDYGREDIEAQIEEMVAKDLLTPQQAQSVDAARIRRFLNSPLGKRMLASKSINREVPFNIEIPCHELYRDMEDEACHGETLLLQGVVDCYFEEPDGIVLVDYKTDYVAPGNVETIRERYKVQILYYARALEMLTGKKVKEKYIYLFWDGRILGF.

In terms of domain architecture, UvrD-like helicase ATP-binding spans 5-481; that stretch reads TKWTDEQWEA…IILSRNFRSR (477 aa). Residue 26 to 33 coordinates ATP; that stretch reads AAAGAGKT. Positions 526–824 constitute a UvrD-like helicase C-terminal domain; sequence TVGGEVEFHL…RIMSIHKSKG (299 aa). Positions 544-565 are disordered; it reads NFTFENEGEEGRQADEGEEDEE.

This sequence belongs to the helicase family. AddA subfamily. In terms of assembly, heterodimer of AddA and AddB/RexB. It depends on Mg(2+) as a cofactor.

The enzyme catalyses Couples ATP hydrolysis with the unwinding of duplex DNA by translocating in the 3'-5' direction.. It carries out the reaction ATP + H2O = ADP + phosphate + H(+). Functionally, the heterodimer acts as both an ATP-dependent DNA helicase and an ATP-dependent, dual-direction single-stranded exonuclease. Recognizes the chi site generating a DNA molecule suitable for the initiation of homologous recombination. The AddA nuclease domain is required for chi fragment generation; this subunit has the helicase and 3' -&gt; 5' nuclease activities. In Acetivibrio thermocellus (strain ATCC 27405 / DSM 1237 / JCM 9322 / NBRC 103400 / NCIMB 10682 / NRRL B-4536 / VPI 7372) (Clostridium thermocellum), this protein is ATP-dependent helicase/nuclease subunit A.